A 59-amino-acid polypeptide reads, in one-letter code: Small, acid-soluble spore protein C1 (59 aa).

The protein belongs to the alpha/beta-type SASP family. Post-translationally, SASP are degraded in the first minutes of spore germination and provide amino acids for both new protein synthesis and metabolism.

SASP are bound to spore DNA. They are double-stranded DNA-binding proteins that cause DNA to change to an a-like conformation. They protect the DNA backbone from chemical and enzymatic cleavage and are thus involved in dormant spore's high resistance to UV light. This Clostridium perfringens (strain 13 / Type A) protein is Small, acid-soluble spore protein C1 (sspC1).